Consider the following 413-residue polypeptide: Transforming growth factor beta-2 proprotein (413 aa).

Residues 1–19 (MHYYVLFTFLTLDLAPVAL) form the signal peptide. Asparagine 72, asparagine 140, and asparagine 241 each carry an N-linked (GlcNAc...) asparagine glycan. Disulfide bonds link cysteine 308-cysteine 317, cysteine 316-cysteine 379, cysteine 345-cysteine 410, and cysteine 349-cysteine 412.

Belongs to the TGF-beta family. As to quaternary structure, interacts with Transforming growth factor beta-2 (TGF-beta-2) chain; interaction is non-covalent and maintains (TGF-beta-2) in a latent state. In terms of assembly, homodimer; disulfide-linked. Interacts with TGF-beta receptors (tgfbr1 and tgfbr2), leading to signal transduction. In terms of processing, the precursor proprotein is cleaved in the Golgi apparatus to form Transforming growth factor beta-2 (TGF-beta-2) and Latency-associated peptide (LAP) chains, which remain non-covalently linked, rendering TGF-beta-2 inactive.

Its subcellular location is the secreted. The protein localises to the extracellular space. The protein resides in the extracellular matrix. Functionally, precursor of the Latency-associated peptide (LAP) and Transforming growth factor beta-2 (TGF-beta-2) chains, which constitute the regulatory and active subunit of TGF-beta-2, respectively. Required to maintain the Transforming growth factor beta-2 (TGF-beta-2) chain in a latent state during storage in extracellular matrix. Associates non-covalently with TGF-beta-2 and regulates its activation via interaction with 'milieu molecules', such as ltbp1 and lrrc32/garp, that control activation of TGF-beta-2. In terms of biological role, multifunctional protein that regulates various processes such as angiogenesis and heart development. Activation into mature form follows different steps: following cleavage of the proprotein in the Golgi apparatus, Latency-associated peptide (LAP) and Transforming growth factor beta-2 (TGF-beta-2) chains remain non-covalently linked rendering TGF-beta-2 inactive during storage in extracellular matrix. At the same time, LAP chain interacts with 'milieu molecules', such as ltbp1 and lrrc32/garp, that control activation of TGF-beta-2 and maintain it in a latent state during storage in extracellular milieus. Once activated following release of LAP, TGF-beta-2 acts by binding to TGF-beta receptors (tgfbr1 and tgfbr2), which transduce signal. The chain is Transforming growth factor beta-2 proprotein (tgfb2) from Xenopus laevis (African clawed frog).